Consider the following 446-residue polypeptide: Divalent metal cation transporter MntH (446 aa).

The next 11 membrane-spanning stretches (helical) occupy residues 32-52, 59-79, 107-127, 139-159, 168-188, 210-230, 264-284, 303-323, 355-375, 381-401, and 420-440; these read FSFL…GNWI, AQFG…AMLL, AFVF…AEVI, IPLL…LFIM, AIVG…VFIA, GALF…NLYL, SIAF…FFGV, PLLG…ALLA, LITR…FNSN, QLLV…LIPL, and VNII…YLII.

The protein belongs to the NRAMP family.

Its subcellular location is the cell membrane. H(+)-stimulated, divalent metal cation uptake system. The polypeptide is Divalent metal cation transporter MntH (Staphylococcus saprophyticus subsp. saprophyticus (strain ATCC 15305 / DSM 20229 / NCIMB 8711 / NCTC 7292 / S-41)).